The following is a 188-amino-acid chain: Gamma-glutamylcyclotransferase (188 aa).

Residue 19 to 22 (YFAY) coordinates substrate. Glu98 acts as the Proton acceptor in catalysis. At Ser173 the chain carries Phosphoserine.

Belongs to the gamma-glutamylcyclotransferase family. As to quaternary structure, homodimer.

The catalysed reaction is an alpha-(gamma-L-glutamyl)-L-amino acid = 5-oxo-L-proline + an L-alpha-amino acid. In terms of biological role, catalyzes the formation of 5-oxoproline from gamma-glutamyl dipeptides and may play a significant role in glutathione homeostasis. Induces release of cytochrome c from mitochondria with resultant induction of apoptosis. This Bos taurus (Bovine) protein is Gamma-glutamylcyclotransferase (GGCT).